The chain runs to 246 residues: E3 ubiquitin-protein ligase RNF182 (246 aa).

The segment at 22 to 70 adopts an RING-type zinc-finger fold; that stretch reads CKICYNRYNLRQRKPKVLGCCHRVCAKCLYKLVDCGESPQCVIVCPFCR. Helical transmembrane passes span 184 to 204 and 211 to 231; these read VFVWLLGLLYFSSLPLGIYLL and LGVVFVSLVPSSLVILMIYGF.

As to quaternary structure, interacts with ATP6V0C.

The protein resides in the membrane. It localises to the cytoplasm. It catalyses the reaction S-ubiquitinyl-[E2 ubiquitin-conjugating enzyme]-L-cysteine + [acceptor protein]-L-lysine = [E2 ubiquitin-conjugating enzyme]-L-cysteine + N(6)-ubiquitinyl-[acceptor protein]-L-lysine.. It functions in the pathway protein modification; protein ubiquitination. In terms of biological role, E3 ubiquitin-protein ligase that mediates the ubiquitination of atp6v0c and targets it to degradation via the ubiquitin-proteasome pathway. This chain is E3 ubiquitin-protein ligase RNF182 (rnf182), found in Xenopus laevis (African clawed frog).